The primary structure comprises 302 residues: tRNA dimethylallyltransferase (302 aa).

Position 10–17 (10–17 (GPTATGKS)) interacts with ATP. 12 to 17 (TATGKS) is a substrate binding site. Residues 35–38 (DSRQ) form an interaction with substrate tRNA region.

The protein belongs to the IPP transferase family. As to quaternary structure, monomer. The cofactor is Mg(2+).

It carries out the reaction adenosine(37) in tRNA + dimethylallyl diphosphate = N(6)-dimethylallyladenosine(37) in tRNA + diphosphate. Catalyzes the transfer of a dimethylallyl group onto the adenine at position 37 in tRNAs that read codons beginning with uridine, leading to the formation of N6-(dimethylallyl)adenosine (i(6)A). The chain is tRNA dimethylallyltransferase from Acaryochloris marina (strain MBIC 11017).